The sequence spans 79 residues: uncharacterized protein (79 aa).

2 helical membrane passes run 18 to 38 (IWIINLKVIIKIIISEIIVLI) and 50 to 70 (GITFVKNEFIISSIFYFFFLF).

It localises to the host membrane. This is an uncharacterized protein from Spiroplasma virus SpV1-R8A2 B (SpV1).